The primary structure comprises 492 residues: Catalase (492 aa).

Residues His65 and Asn138 contribute to the active site. Tyr348 is a binding site for heme.

Belongs to the catalase family. In terms of assembly, homotetramer. The cofactor is heme.

Its subcellular location is the cytoplasm. It is found in the cytosol. The protein resides in the peroxisome matrix. The enzyme catalyses 2 H2O2 = O2 + 2 H2O. Functionally, catalyzes the degradation of hydrogen peroxide (H(2)O(2)) generated by peroxisomal oxidases to water and oxygen, thereby protecting cells from the toxic effects of hydrogen peroxide. This chain is Catalase, found in Vigna radiata var. radiata (Mung bean).